Consider the following 433-residue polypeptide: Glutamate-1-semialdehyde 2,1-aminomutase (433 aa).

The residue at position 270 (lysine 270) is an N6-(pyridoxal phosphate)lysine.

It belongs to the class-III pyridoxal-phosphate-dependent aminotransferase family. HemL subfamily. In terms of assembly, homodimer. It depends on pyridoxal 5'-phosphate as a cofactor.

The protein resides in the cytoplasm. The catalysed reaction is (S)-4-amino-5-oxopentanoate = 5-aminolevulinate. It functions in the pathway porphyrin-containing compound metabolism; protoporphyrin-IX biosynthesis; 5-aminolevulinate from L-glutamyl-tRNA(Glu): step 2/2. In Symbiobacterium thermophilum (strain DSM 24528 / JCM 14929 / IAM 14863 / T), this protein is Glutamate-1-semialdehyde 2,1-aminomutase.